The primary structure comprises 340 residues: Cytoskeleton protein RodZ (340 aa).

Residues M1–G111 lie on the Cytoplasmic side of the membrane. An HTH cro/C1-type domain is found at L19–L79. The H-T-H motif DNA-binding region spans Q30–E49. Residues W112–W132 form a helical; Signal-anchor for type II membrane protein membrane-spanning segment. The Periplasmic portion of the chain corresponds to W133–P340. Residues A162–A252 are disordered. The segment covering A183–P201 has biased composition (polar residues). The span at A202 to P233 shows a compositional bias: low complexity.

It belongs to the RodZ family.

The protein resides in the cell inner membrane. Cytoskeletal protein that is involved in cell-shape control through regulation of the length of the long axis. In Erwinia tasmaniensis (strain DSM 17950 / CFBP 7177 / CIP 109463 / NCPPB 4357 / Et1/99), this protein is Cytoskeleton protein RodZ.